The primary structure comprises 466 residues: MFIFDSAKKIKREFIPQEQGKVSLYVCGPTVYDDAHLGHAKSALVFDLLCRVLNANGYEVTYARNITDIDDKIINRAQEQNKTIKEVTDFYTDAYHKEMALLGISRPDIEPKATESLDAMYALVQKLLDNKHAYTTDDGDVYFDTSSDSKYLTLSNRVQDESEKLQRVQSSSQKRNPADFALWKSIHDESVTFGSPFGKGRPGWHLECSAMIEKHLSKPNAKFAVDIHGGGADLLFPHHENEAAQTRCATDHALAAYWMHNGFVNIDGEKMSKSLGNSFFLKDALKIYDGEVLRFYLLSTHYRSNFNFNEEDLATAKKRLDKIYRLKKRLFGVTYEDEKTDFKKELLETLSDDLNISASLALIEEMITRANETLDTAGKHKELKREALSNLSFIEKILGFGIKNPYEYFQFGVNEETKTEIAKLIEKRAEAKKSKDFAASDMLRDKILAYGVNLMDTPQGSFWEKI.

Cys27 serves as a coordination point for Zn(2+). Residues 29 to 39 (PTVYDDAHLGH) carry the 'HIGH' region motif. 3 residues coordinate Zn(2+): Cys208, His238, and Glu242. The 'KMSKS' region motif lies at 270-274 (KMSKS). Lys273 contacts ATP.

It belongs to the class-I aminoacyl-tRNA synthetase family. As to quaternary structure, monomer. It depends on Zn(2+) as a cofactor.

Its subcellular location is the cytoplasm. The enzyme catalyses tRNA(Cys) + L-cysteine + ATP = L-cysteinyl-tRNA(Cys) + AMP + diphosphate. This Sulfurimonas denitrificans (strain ATCC 33889 / DSM 1251) (Thiomicrospira denitrificans (strain ATCC 33889 / DSM 1251)) protein is Cysteine--tRNA ligase.